The following is a 201-amino-acid chain: Small ribosomal subunit protein uS4c (201 aa).

A disordered region spans residues Gly-20–Gln-43. The S4 RNA-binding domain occupies Met-89–Gln-149.

It belongs to the universal ribosomal protein uS4 family. As to quaternary structure, part of the 30S ribosomal subunit. Contacts protein S5. The interaction surface between S4 and S5 is involved in control of translational fidelity.

Its subcellular location is the plastid. It is found in the chloroplast. One of the primary rRNA binding proteins, it binds directly to 16S rRNA where it nucleates assembly of the body of the 30S subunit. Functionally, with S5 and S12 plays an important role in translational accuracy. The protein is Small ribosomal subunit protein uS4c (rps4) of Buxus microphylla (Littleleaf boxwood).